The following is a 452-amino-acid chain: Mannan endo-1,6-alpha-mannosidase DCW1 (452 aa).

A signal peptide spans 1-18 (MKFSIYLIISLFSSFSHA). 10 N-linked (GlcNAc...) asparagine glycosylation sites follow: Asn25, Asn81, Asn106, Asn130, Asn200, Asn237, Asn240, Asn262, Asn271, and Asn286. Gly431 is lipidated: GPI-anchor amidated glycine. Positions 432–452 (AGIITAIIGASLVGSCVWLIL) are cleaved as a propeptide — removed in mature form.

The protein belongs to the glycosyl hydrolase 76 family.

Its subcellular location is the cell membrane. The enzyme catalyses Random hydrolysis of (1-&gt;6)-alpha-D-mannosidic linkages in unbranched (1-&gt;6)-mannans.. Functionally, probable mannosidase required for normal synthesis of the cell wall. The sequence is that of Mannan endo-1,6-alpha-mannosidase DCW1 (DCW1) from Candida albicans (strain SC5314 / ATCC MYA-2876) (Yeast).